The chain runs to 189 residues: Orotate phosphoribosyltransferase (189 aa).

5-phospho-alpha-D-ribose 1-diphosphate-binding positions include R94, K95, K98, and 120–128 (EDVTTTGGS). T124 and R152 together coordinate orotate.

Belongs to the purine/pyrimidine phosphoribosyltransferase family. PyrE subfamily. As to quaternary structure, homodimer. It depends on Mg(2+) as a cofactor.

It carries out the reaction orotidine 5'-phosphate + diphosphate = orotate + 5-phospho-alpha-D-ribose 1-diphosphate. It participates in pyrimidine metabolism; UMP biosynthesis via de novo pathway; UMP from orotate: step 1/2. In terms of biological role, catalyzes the transfer of a ribosyl phosphate group from 5-phosphoribose 1-diphosphate to orotate, leading to the formation of orotidine monophosphate (OMP). The polypeptide is Orotate phosphoribosyltransferase (Thermococcus gammatolerans (strain DSM 15229 / JCM 11827 / EJ3)).